The sequence spans 420 residues: Phosphoribosylamine--glycine ligase (420 aa).

Positions 108 to 314 (KQIMVKYGIP…FAQNIDDILH (207 aa)) constitute an ATP-grasp domain. Residue 134-195 (IEEQGAPIVV…EEFLAGEEFS (62 aa)) coordinates ATP. The Mg(2+) site is built by Glu284 and Asn286.

It belongs to the GARS family. Mg(2+) serves as cofactor. It depends on Mn(2+) as a cofactor.

The enzyme catalyses 5-phospho-beta-D-ribosylamine + glycine + ATP = N(1)-(5-phospho-beta-D-ribosyl)glycinamide + ADP + phosphate + H(+). It participates in purine metabolism; IMP biosynthesis via de novo pathway; N(1)-(5-phospho-D-ribosyl)glycinamide from 5-phospho-alpha-D-ribose 1-diphosphate: step 2/2. The polypeptide is Phosphoribosylamine--glycine ligase (Streptococcus suis).